The sequence spans 606 residues: Replication protein E1 (606 aa).

Residues 76-78 (KRK) carry the Nuclear localization signal motif. A phosphoserine; by host mark is found at Ser-81 and Ser-89. A DNA-binding region region spans residues 144-307 (GTGDVDIDYL…TVLGHQNAEA (164 aa)). Residues 406–556 (VNFIMFLAAL…FPMKSDNTPQ (151 aa)) form the SF3 helicase domain. 432-439 (GPPNSGKS) is an ATP binding site. Lys-513 is covalently cross-linked (Glycyl lysine isopeptide (Lys-Gly) (interchain with G-Cter in SUMO)). The tract at residues 581 to 606 (EEEEEGEHGETQRAFQCSARSANEHI) is disordered. The segment covering 593–606 (RAFQCSARSANEHI) has biased composition (polar residues).

The protein belongs to the papillomaviridae E1 protein family. Can form hexamers. Interacts with E2 protein; this interaction increases E1 DNA binding specificity. Interacts with host DNA polymerase subunit POLA2. Interacts with host single stranded DNA-binding protein RPA1. Interacts with host TOP1; this interaction stimulates the enzymatic activity of TOP1. In terms of processing, phosphorylated. Sumoylated.

It is found in the host nucleus. The catalysed reaction is Couples ATP hydrolysis with the unwinding of duplex DNA by translocating in the 3'-5' direction.. The enzyme catalyses ATP + H2O = ADP + phosphate + H(+). Functionally, ATP-dependent DNA 3'-5' helicase required for initiation of viral DNA replication. It forms a complex with the viral E2 protein. The E1-E2 complex binds to the replication origin which contains binding sites for both proteins. During the initial step, a dimer of E1 interacts with a dimer of protein E2 leading to a complex that binds the viral origin of replication with high specificity. Then, a second dimer of E1 displaces the E2 dimer in an ATP-dependent manner to form the E1 tetramer. Following this, two E1 monomers are added to each half of the site, which results in the formation of two E1 trimers on the viral ori. Subsequently, two hexamers will be created. The double hexamer acts as a bi-directional helicase machinery and unwinds the viral DNA and then recruits the host DNA polymerase to start replication. In Human papillomavirus type RTRX7, this protein is Replication protein E1.